A 204-amino-acid chain; its full sequence is UPF0637 protein LMHCC_1566 (204 aa).

Belongs to the UPF0637 family.

This chain is UPF0637 protein LMHCC_1566, found in Listeria monocytogenes serotype 4a (strain HCC23).